An 80-amino-acid polypeptide reads, in one-letter code: Exodeoxyribonuclease 7 small subunit (80 aa).

This sequence belongs to the XseB family. Heterooligomer composed of large and small subunits.

It is found in the cytoplasm. The catalysed reaction is Exonucleolytic cleavage in either 5'- to 3'- or 3'- to 5'-direction to yield nucleoside 5'-phosphates.. Functionally, bidirectionally degrades single-stranded DNA into large acid-insoluble oligonucleotides, which are then degraded further into small acid-soluble oligonucleotides. The chain is Exodeoxyribonuclease 7 small subunit from Vibrio cholerae serotype O1 (strain ATCC 39541 / Classical Ogawa 395 / O395).